The following is a 198-amino-acid chain: Mediator of RNA polymerase II transcription subunit 22 (198 aa).

The segment at 159-198 (WGSPEMTSDPSHANHEVSDHLGSQESMQRHRNGSGTSEQS) is disordered.

Belongs to the Mediator complex subunit 22 family. In terms of assembly, component of the Mediator complex.

It localises to the nucleus. Its function is as follows. Component of the Mediator complex, a coactivator involved in the regulated transcription of nearly all RNA polymerase II-dependent genes. Mediator functions as a bridge to convey information from gene-specific regulatory proteins to the basal RNA polymerase II transcription machinery. Mediator is recruited to promoters by direct interactions with regulatory proteins and serves as a scaffold for the assembly of a functional preinitiation complex with RNA polymerase II and the general transcription factors. The sequence is that of Mediator of RNA polymerase II transcription subunit 22 (med22) from Danio rerio (Zebrafish).